The following is a 264-amino-acid chain: S-adenosylmethionine decarboxylase proenzyme (264 aa).

S113 serves as the catalytic Schiff-base intermediate with substrate; via pyruvic acid. Position 113 is a pyruvic acid (Ser); by autocatalysis (S113). H118 acts as the Proton acceptor; for processing activity in catalysis. C141 (proton donor; for catalytic activity) is an active-site residue.

It belongs to the prokaryotic AdoMetDC family. Type 2 subfamily. In terms of assembly, heterooctamer of four alpha and four beta chains arranged as a tetramer of alpha/beta heterodimers. Pyruvate is required as a cofactor. Is synthesized initially as an inactive proenzyme. Formation of the active enzyme involves a self-maturation process in which the active site pyruvoyl group is generated from an internal serine residue via an autocatalytic post-translational modification. Two non-identical subunits are generated from the proenzyme in this reaction, and the pyruvate is formed at the N-terminus of the alpha chain, which is derived from the carboxyl end of the proenzyme. The post-translation cleavage follows an unusual pathway, termed non-hydrolytic serinolysis, in which the side chain hydroxyl group of the serine supplies its oxygen atom to form the C-terminus of the beta chain, while the remainder of the serine residue undergoes an oxidative deamination to produce ammonia and the pyruvoyl group blocking the N-terminus of the alpha chain.

It carries out the reaction S-adenosyl-L-methionine + H(+) = S-adenosyl 3-(methylsulfanyl)propylamine + CO2. The protein operates within amine and polyamine biosynthesis; S-adenosylmethioninamine biosynthesis; S-adenosylmethioninamine from S-adenosyl-L-methionine: step 1/1. Functionally, catalyzes the decarboxylation of S-adenosylmethionine to S-adenosylmethioninamine (dcAdoMet), the propylamine donor required for the synthesis of the polyamines spermine and spermidine from the diamine putrescine. This is S-adenosylmethionine decarboxylase proenzyme from Hahella chejuensis (strain KCTC 2396).